Reading from the N-terminus, the 352-residue chain is Small ribosomal subunit biogenesis GTPase RsgA (352 aa).

Residues 109–277 form the CP-type G domain; it reads DTVLKRPDMY…LIDSPGIREF (169 aa). GTP-binding positions include 165-168 and 219-227; these read NKAD and GQSGVGKSS. Positions 301, 306, 308, and 314 each coordinate Zn(2+).

The protein belongs to the TRAFAC class YlqF/YawG GTPase family. RsgA subfamily. As to quaternary structure, monomer. Associates with 30S ribosomal subunit, binds 16S rRNA. Zn(2+) is required as a cofactor.

It is found in the cytoplasm. One of several proteins that assist in the late maturation steps of the functional core of the 30S ribosomal subunit. Helps release RbfA from mature subunits. May play a role in the assembly of ribosomal proteins into the subunit. Circularly permuted GTPase that catalyzes slow GTP hydrolysis, GTPase activity is stimulated by the 30S ribosomal subunit. The polypeptide is Small ribosomal subunit biogenesis GTPase RsgA (Alcanivorax borkumensis (strain ATCC 700651 / DSM 11573 / NCIMB 13689 / SK2)).